The following is a 72-amino-acid chain: SRY-related protein MG44 (72 aa).

The segment at residues 1 to 69 (VKRPMNAFMV…KHMADYPNYK (69 aa)) is a DNA-binding region (HMG box).

It localises to the nucleus. The polypeptide is SRY-related protein MG44 (Tarentola mauritanica (Common wall gecko)).